Consider the following 205-residue polypeptide: Holliday junction branch migration complex subunit RuvA (205 aa).

Positions 1-64 (MIGRLRGIIL…EDAQLLFGFN (64 aa)) are domain I. The domain II stretch occupies residues 65–143 (DKQERALFRE…GLSGDLFNSV (79 aa)). The flexible linker stretch occupies residues 144-156 (SDIPLTSPANVDN). The tract at residues 157 to 205 (RVGEPEAEAAAALVALGYKPQEASRMISKIARPDADCETLIRDALRAAL) is domain III.

This sequence belongs to the RuvA family. As to quaternary structure, homotetramer. Forms an RuvA(8)-RuvB(12)-Holliday junction (HJ) complex. HJ DNA is sandwiched between 2 RuvA tetramers; dsDNA enters through RuvA and exits via RuvB. An RuvB hexamer assembles on each DNA strand where it exits the tetramer. Each RuvB hexamer is contacted by two RuvA subunits (via domain III) on 2 adjacent RuvB subunits; this complex drives branch migration. In the full resolvosome a probable DNA-RuvA(4)-RuvB(12)-RuvC(2) complex forms which resolves the HJ.

Its subcellular location is the cytoplasm. Its function is as follows. The RuvA-RuvB-RuvC complex processes Holliday junction (HJ) DNA during genetic recombination and DNA repair, while the RuvA-RuvB complex plays an important role in the rescue of blocked DNA replication forks via replication fork reversal (RFR). RuvA specifically binds to HJ cruciform DNA, conferring on it an open structure. The RuvB hexamer acts as an ATP-dependent pump, pulling dsDNA into and through the RuvAB complex. HJ branch migration allows RuvC to scan DNA until it finds its consensus sequence, where it cleaves and resolves the cruciform DNA. This Pectobacterium atrosepticum (strain SCRI 1043 / ATCC BAA-672) (Erwinia carotovora subsp. atroseptica) protein is Holliday junction branch migration complex subunit RuvA.